An 881-amino-acid polypeptide reads, in one-letter code: MPDHSLFRLRILPWCIALAMSGSYSSVWAEDDIQFDSRFLELKGDTKIDLKRFSSQGYVEPGKYNLQVQLNKQPLAEEYDIYWYAGEDDVSKSYACLTPELVAQFGLKEDVAKNLQWSHDGKCLKPGQLEGVEIKADLSQSALVISLPQAYLEYTWPDWDPPSRWDDGISGIIADYSITAQTRHEENGGDDSNEISGNGTVGVNLGPWRMRADWQTNYQHTRSNDDDDEFGGDDTQKKWEWSRYYAWRALPSLKAKLALGEDYLNSDIFDGFNYVGGSVSTDDQMLPPNLRGYAPDISGVAHTTAKVTVSQMGRVIYETQVPAGPFRIQDLGDSVSGTLHIRIEEQNGQVQEYDISTASMPYLTRPGQVRYKIMMGRPQEWGHHVEGGFFSGAEASWGIANGWSLYGGALGDENYQSAALGVGRDLSTFGAVAFDVTHSHTKLDKDTAYGKGSLDGNSFRVSYSKDFDQLNSRVTFAGYRFSEENFMTMSEYLDASDSEMVRTGNDKEMYTATYNQNFRDAGVSVYLNYTRHTYWDREEQTNYNIMLSHYFNMGSIRNMSVSLTGYRYEYDNRADKGMYISLSMPWGDNSTVSYNGNYGSGTDSSQVGYFSRVDDATHYQLNIGTSDKHTSVDGYYSHDGSLAQVDLSANYHEGQYTSAGLSLQGGATLTTHGGALHRTQNMGGTRLLIDADGVADVPVEGNGAAVYTNMFGKAVVSDVNNYYRNQAYIDLNKLPENAEATQSVVQATLTEGAIGYRKFAVISGQKAMAVLRLQDGSHPPFGAEVKNDNEQTVGLVDDDGSVYLAGVKPGEHMSVFWSGVAHCDINLPDPLPADLFNGLLLPCQHKGNVAPVVPDDIKPVIQEQTQQVTPTDPPVSVSANQ.

A signal peptide spans 1 to 29 (MPDHSLFRLRILPWCIALAMSGSYSSVWA).

The protein belongs to the fimbrial export usher family.

The protein localises to the cell outer membrane. Part of the yfcOPQRSUV fimbrial operon. Could contribute to adhesion to various surfaces in specific environmental niches. Increases adhesion to eukaryotic T24 bladder epithelial cells in the absence of fim genes. Probably involved in the export and assembly of fimbrial subunits across the outer membrane. The protein is Putative outer membrane usher protein YfcU (yfcU) of Escherichia coli (strain K12).